The sequence spans 383 residues: Succinate--CoA ligase [ADP-forming] subunit beta 2 (383 aa).

Positions 9-231 (RELFKEHGIV…QEDADSLEAR (223 aa)) constitute an ATP-grasp domain. ATP contacts are provided by residues Lys-45, 52-54 (GRG), Cys-94, and Glu-99. Mg(2+) is bound by residues Asn-187 and Asp-201. Residues Asn-251 and 308 to 310 (GIT) contribute to the substrate site.

This sequence belongs to the succinate/malate CoA ligase beta subunit family. In terms of assembly, heterotetramer of two alpha and two beta subunits. The cofactor is Mg(2+).

It catalyses the reaction succinate + ATP + CoA = succinyl-CoA + ADP + phosphate. The catalysed reaction is GTP + succinate + CoA = succinyl-CoA + GDP + phosphate. It functions in the pathway carbohydrate metabolism; tricarboxylic acid cycle; succinate from succinyl-CoA (ligase route): step 1/1. Succinyl-CoA synthetase functions in the citric acid cycle (TCA), coupling the hydrolysis of succinyl-CoA to the synthesis of either ATP or GTP and thus represents the only step of substrate-level phosphorylation in the TCA. The beta subunit provides nucleotide specificity of the enzyme and binds the substrate succinate, while the binding sites for coenzyme A and phosphate are found in the alpha subunit. In Streptomyces coelicolor (strain ATCC BAA-471 / A3(2) / M145), this protein is Succinate--CoA ligase [ADP-forming] subunit beta 2.